Consider the following 349-residue polypeptide: Anthranilate phosphoribosyltransferase (349 aa).

5-phospho-alpha-D-ribose 1-diphosphate contacts are provided by residues Gly-82, 85 to 86 (GD), 92 to 95 (NVST), 110 to 118 (KHGNRAVSG), and Ser-122. Gly-82 serves as a coordination point for anthranilate. Ser-94 lines the Mg(2+) pocket. Asn-113 is a binding site for anthranilate. Arg-168 lines the anthranilate pocket. Asp-227 and Glu-228 together coordinate Mg(2+).

The protein belongs to the anthranilate phosphoribosyltransferase family. In terms of assembly, homodimer. Mg(2+) is required as a cofactor.

The catalysed reaction is N-(5-phospho-beta-D-ribosyl)anthranilate + diphosphate = 5-phospho-alpha-D-ribose 1-diphosphate + anthranilate. It participates in amino-acid biosynthesis; L-tryptophan biosynthesis; L-tryptophan from chorismate: step 2/5. Functionally, catalyzes the transfer of the phosphoribosyl group of 5-phosphorylribose-1-pyrophosphate (PRPP) to anthranilate to yield N-(5'-phosphoribosyl)-anthranilate (PRA). This is Anthranilate phosphoribosyltransferase from Pseudomonas entomophila (strain L48).